Consider the following 516-residue polypeptide: Histidine ammonia-lyase 1 (516 aa).

The 5-imidazolinone (Ser-Gly) cross-link spans 147–149 (SSG). The residue at position 148 (Ser-148) is a 2,3-didehydroalanine (Ser).

This sequence belongs to the PAL/histidase family. Post-translationally, contains an active site 4-methylidene-imidazol-5-one (MIO), which is formed autocatalytically by cyclization and dehydration of residues Ser-Ser-Gly.

The protein resides in the cytoplasm. It carries out the reaction L-histidine = trans-urocanate + NH4(+). Its pathway is amino-acid degradation; L-histidine degradation into L-glutamate; N-formimidoyl-L-glutamate from L-histidine: step 1/3. The chain is Histidine ammonia-lyase 1 (hutH1) from Fusobacterium nucleatum subsp. nucleatum (strain ATCC 25586 / DSM 15643 / BCRC 10681 / CIP 101130 / JCM 8532 / KCTC 2640 / LMG 13131 / VPI 4355).